The chain runs to 172 residues: Probable tryptophan transport protein (172 aa).

4 helical membrane passes run 7–29, 49–71, 104–126, and 136–158; these read VIMALFAAIGAALHSIIPPFLGG, VQNVLVIGIVTGIISALTTAFPA, AVLTVIGTILSGIVFLSSALLIV, and FAAVVLPAAVLNTISMIIIYPIV.

The protein belongs to the vitamin uptake transporter (VUT/ECF) (TC 2.A.88) family. TrpP subfamily.

It is found in the cell membrane. Functionally, probably involved in tryptophan uptake. The polypeptide is Probable tryptophan transport protein (trpP) (Bacillus subtilis (strain 168)).